Reading from the N-terminus, the 339-residue chain is Ketol-acid reductoisomerase (NADP(+)) (339 aa).

The KARI N-terminal Rossmann domain maps to 1-182 (MPNRYYEKDG…GCLKAGVIDT (182 aa)). NADP(+) contacts are provided by residues 25-28 (YGSQ), serine 51, serine 53, and 83-86 (DHIQ). Histidine 108 is a catalytic residue. Glycine 134 serves as a coordination point for NADP(+). Residues 183–328 (NFREETESDL…RELREMMTFL (146 aa)) enclose the KARI C-terminal knotted domain. The Mg(2+) site is built by aspartate 191, glutamate 195, glutamate 227, and glutamate 231. Serine 252 contributes to the substrate binding site.

The protein belongs to the ketol-acid reductoisomerase family. It depends on Mg(2+) as a cofactor.

It carries out the reaction (2R)-2,3-dihydroxy-3-methylbutanoate + NADP(+) = (2S)-2-acetolactate + NADPH + H(+). The catalysed reaction is (2R,3R)-2,3-dihydroxy-3-methylpentanoate + NADP(+) = (S)-2-ethyl-2-hydroxy-3-oxobutanoate + NADPH + H(+). It functions in the pathway amino-acid biosynthesis; L-isoleucine biosynthesis; L-isoleucine from 2-oxobutanoate: step 2/4. Its pathway is amino-acid biosynthesis; L-valine biosynthesis; L-valine from pyruvate: step 2/4. In terms of biological role, involved in the biosynthesis of branched-chain amino acids (BCAA). Catalyzes an alkyl-migration followed by a ketol-acid reduction of (S)-2-acetolactate (S2AL) to yield (R)-2,3-dihydroxy-isovalerate. In the isomerase reaction, S2AL is rearranged via a Mg-dependent methyl migration to produce 3-hydroxy-3-methyl-2-ketobutyrate (HMKB). In the reductase reaction, this 2-ketoacid undergoes a metal-dependent reduction by NADPH to yield (R)-2,3-dihydroxy-isovalerate. In Solibacter usitatus (strain Ellin6076), this protein is Ketol-acid reductoisomerase (NADP(+)).